Reading from the N-terminus, the 330-residue chain is ADP-L-glycero-D-manno-heptose-6-epimerase (330 aa).

Residues 11-12, 32-33, Lys39, Lys54, 75-79, and Asn92 contribute to the NADP(+) site; these read FI, DN, and EGACS. The Proton acceptor role is filled by Tyr139. Lys143 is an NADP(+) binding site. Asn168 provides a ligand contact to substrate. NADP(+) contacts are provided by Val169 and Lys177. Lys177 acts as the Proton acceptor in catalysis. Residues Arg179, His186, 200 to 203, Arg213, and Tyr292 each bind substrate; that span reads FGEY.

This sequence belongs to the NAD(P)-dependent epimerase/dehydratase family. HldD subfamily. As to quaternary structure, homopentamer. Requires NADP(+) as cofactor.

The catalysed reaction is ADP-D-glycero-beta-D-manno-heptose = ADP-L-glycero-beta-D-manno-heptose. It participates in nucleotide-sugar biosynthesis; ADP-L-glycero-beta-D-manno-heptose biosynthesis; ADP-L-glycero-beta-D-manno-heptose from D-glycero-beta-D-manno-heptose 7-phosphate: step 4/4. Functionally, catalyzes the interconversion between ADP-D-glycero-beta-D-manno-heptose and ADP-L-glycero-beta-D-manno-heptose via an epimerization at carbon 6 of the heptose. In Paraburkholderia xenovorans (strain LB400), this protein is ADP-L-glycero-D-manno-heptose-6-epimerase.